The following is a 120-amino-acid chain: Meiosis expressed gene 1 protein homolog (120 aa).

The segment at 1 to 45 (MDGLAIGGVSAPMTAERPQQVKKQLSRRTPDAADGRKPTRMERAK) is disordered. A compositionally biased stretch (basic and acidic residues) spans 28–45 (RTPDAADGRKPTRMERAK).

It belongs to the MEIG1 family.

The protein is Meiosis expressed gene 1 protein homolog of Oxyrrhis marina (Dinoflagellate).